We begin with the raw amino-acid sequence, 436 residues long: MSNFSPREIVSELDRYIIGQKEAKRAVAIALRNRWRRQQLEPGLREEVMPKNILMIGPTGVGKTEISRRLAKLAGAPFVKVEATKFTEVGYVGRDVEQIVRDLVEVAIALTREKMREGVEARAHLNAEERVLEALVGRTASPATRDSFRQKLRSGELDDKEIEIQVADAGGGMGSFEIPGMPGANIGVLNINDMLQKAMGGGRTKTVKTTVKDSYKFLINDESDKLLDQDEVVRRALSSAENDGIVFIDEIDKIASREGGMGAGVSREGVQRDLLPLVEGTTVATKYGPVKTDHVLFIASGAFHVAKPSDLLPELQGRLPIRVELRALEKEDFRRILTETEASLIKQYIALMETEGVELEFTEDAIVRLAEVAVDLNASVENIGARRLQTVMERVLDEISYNAPDRSGSKMVIDAAYVDQHVGDLAKNTDLSRFIL.

ATP is bound by residues isoleucine 18, 60 to 65, aspartate 249, glutamate 314, and arginine 386; that span reads GVGKTE.

This sequence belongs to the ClpX chaperone family. HslU subfamily. As to quaternary structure, a double ring-shaped homohexamer of HslV is capped on each side by a ring-shaped HslU homohexamer. The assembly of the HslU/HslV complex is dependent on binding of ATP.

Its subcellular location is the cytoplasm. ATPase subunit of a proteasome-like degradation complex; this subunit has chaperone activity. The binding of ATP and its subsequent hydrolysis by HslU are essential for unfolding of protein substrates subsequently hydrolyzed by HslV. HslU recognizes the N-terminal part of its protein substrates and unfolds these before they are guided to HslV for hydrolysis. The polypeptide is ATP-dependent protease ATPase subunit HslU (Chelativorans sp. (strain BNC1)).